A 445-amino-acid polypeptide reads, in one-letter code: Probable glycine dehydrogenase (decarboxylating) subunit 1 (445 aa).

It belongs to the GcvP family. N-terminal subunit subfamily. The glycine cleavage system is composed of four proteins: P, T, L and H. In this organism, the P 'protein' is a heterodimer of two subunits.

It carries out the reaction N(6)-[(R)-lipoyl]-L-lysyl-[glycine-cleavage complex H protein] + glycine + H(+) = N(6)-[(R)-S(8)-aminomethyldihydrolipoyl]-L-lysyl-[glycine-cleavage complex H protein] + CO2. Functionally, the glycine cleavage system catalyzes the degradation of glycine. The P protein binds the alpha-amino group of glycine through its pyridoxal phosphate cofactor; CO(2) is released and the remaining methylamine moiety is then transferred to the lipoamide cofactor of the H protein. This Anaeromyxobacter dehalogenans (strain 2CP-C) protein is Probable glycine dehydrogenase (decarboxylating) subunit 1.